Reading from the N-terminus, the 121-residue chain is Small ribosomal subunit protein uS13 (121 aa).

Positions 96–121 (PVRGQNTKNNARTRKGKAVAIAGKKK) are disordered. Residues 106–121 (ARTRKGKAVAIAGKKK) show a composition bias toward basic residues.

The protein belongs to the universal ribosomal protein uS13 family. As to quaternary structure, part of the 30S ribosomal subunit. Forms a loose heterodimer with protein S19. Forms two bridges to the 50S subunit in the 70S ribosome.

Located at the top of the head of the 30S subunit, it contacts several helices of the 16S rRNA. In the 70S ribosome it contacts the 23S rRNA (bridge B1a) and protein L5 of the 50S subunit (bridge B1b), connecting the 2 subunits; these bridges are implicated in subunit movement. Contacts the tRNAs in the A and P-sites. The protein is Small ribosomal subunit protein uS13 of Streptococcus pneumoniae serotype 4 (strain ATCC BAA-334 / TIGR4).